The following is a 397-amino-acid chain: Transcription factor xenB (397 aa).

The interval 220–249 (TISDFETGDRQTISRSDTNSEVRPIPESPS) is disordered. Residues 229–240 (RQTISRSDTNSE) show a composition bias toward polar residues.

Its function is as follows. Transcription factor; part of the gene cluster that mediates the biosynthesis of xenoacremones such as xenoacremone A, a compound that shows inhibitory activity toward the PI3K/AKT signaling pathway and which has the ability to induce apoptosis of A549 lung cancer cells. Acts as a positive regulator of the xenoacremones biosynthesis gene cluster. The protein is Transcription factor xenB of Xenoacremonium sinensis (Endophyte fungus).